The sequence spans 147 residues: NADH-quinone oxidoreductase subunit A (147 aa).

The next 3 membrane-spanning stretches (helical) occupy residues 13-33, 70-90, and 104-124; these read LFSY…LGAV, YLVA…FSWA, and VVVF…WGAL.

It belongs to the complex I subunit 3 family. NDH-1 is composed of 14 different subunits. Subunits NuoA, H, J, K, L, M, N constitute the membrane sector of the complex.

The protein localises to the cell inner membrane. It catalyses the reaction a quinone + NADH + 5 H(+)(in) = a quinol + NAD(+) + 4 H(+)(out). In terms of biological role, NDH-1 shuttles electrons from NADH, via FMN and iron-sulfur (Fe-S) centers, to quinones in the respiratory chain. The immediate electron acceptor for the enzyme in this species is believed to be ubiquinone. Couples the redox reaction to proton translocation (for every two electrons transferred, four hydrogen ions are translocated across the cytoplasmic membrane), and thus conserves the redox energy in a proton gradient. The protein is NADH-quinone oxidoreductase subunit A of Gluconacetobacter diazotrophicus (strain ATCC 49037 / DSM 5601 / CCUG 37298 / CIP 103539 / LMG 7603 / PAl5).